The sequence spans 667 residues: Probable E3 ubiquitin-protein ligase HIP1 (667 aa).

Disordered regions lie at residues 142–163 and 285–311; these read NGASQGSELHGGCSHTGSNGQA and TTAGLSSSSYDPSGGNNNSGGSQRSFR. A compositionally biased stretch (low complexity) spans 288-309; it reads GLSSSSYDPSGGNNNSGGSQRS. The RING-type; atypical zinc finger occupies 620-661; that stretch reads CCICQEEYVDGDDLGTLDCGHDFHVGCVRQWLVVKNTCPICK.

This sequence belongs to the RING-type zinc finger family. In terms of assembly, interacts with HAL3.

The catalysed reaction is S-ubiquitinyl-[E2 ubiquitin-conjugating enzyme]-L-cysteine + [acceptor protein]-L-lysine = [E2 ubiquitin-conjugating enzyme]-L-cysteine + N(6)-ubiquitinyl-[acceptor protein]-L-lysine.. Its pathway is protein modification; protein ubiquitination. Functionally, probable E3 ubiquitin-protein ligase that functions downstream of HAL3 and is required for HAL3-regulated plant growth. Activation of HIP1 by HAL3 may lead to the degradation of cell cycle suppressors, resulting in enhancement of cell division and plant growth. This is Probable E3 ubiquitin-protein ligase HIP1 (HIP1) from Oryza sativa subsp. japonica (Rice).